Reading from the N-terminus, the 280-residue chain is Acetyl-coenzyme A carboxylase carboxyl transferase subunit beta (280 aa).

Residues 28–280 (LFLACPYCGA…IVRLHTAEAE (253 aa)) enclose the CoA carboxyltransferase N-terminal domain. Zn(2+)-binding residues include cysteine 32, cysteine 35, cysteine 50, and cysteine 53. A C4-type zinc finger spans residues 32-53 (CPYCGAQMYNKQLGKYRVCAKC).

It belongs to the AccD/PCCB family. Acetyl-CoA carboxylase is a heterohexamer composed of biotin carboxyl carrier protein (AccB), biotin carboxylase (AccC) and two subunits each of ACCase subunit alpha (AccA) and ACCase subunit beta (AccD). It depends on Zn(2+) as a cofactor.

The protein localises to the cytoplasm. It catalyses the reaction N(6)-carboxybiotinyl-L-lysyl-[protein] + acetyl-CoA = N(6)-biotinyl-L-lysyl-[protein] + malonyl-CoA. It functions in the pathway lipid metabolism; malonyl-CoA biosynthesis; malonyl-CoA from acetyl-CoA: step 1/1. Component of the acetyl coenzyme A carboxylase (ACC) complex. Biotin carboxylase (BC) catalyzes the carboxylation of biotin on its carrier protein (BCCP) and then the CO(2) group is transferred by the transcarboxylase to acetyl-CoA to form malonyl-CoA. The polypeptide is Acetyl-coenzyme A carboxylase carboxyl transferase subunit beta (Leuconostoc mesenteroides subsp. mesenteroides (strain ATCC 8293 / DSM 20343 / BCRC 11652 / CCM 1803 / JCM 6124 / NCDO 523 / NBRC 100496 / NCIMB 8023 / NCTC 12954 / NRRL B-1118 / 37Y)).